Reading from the N-terminus, the 399-residue chain is tRNA-dihydrouridine(16/17) synthase [NAD(P)(+)] (399 aa).

Residues 24–26 and glutamine 80 contribute to the FMN site; that span reads PMV. Cysteine 109 serves as the catalytic Proton donor. Residues lysine 148, histidine 176, 211–213, and 235–236 contribute to the FMN site; these read NGN and AE.

This sequence belongs to the Dus family. Dus1 subfamily. FMN is required as a cofactor.

Its subcellular location is the nucleus. The protein resides in the mitochondrion. It catalyses the reaction 5,6-dihydrouridine(16) in tRNA + NADP(+) = uridine(16) in tRNA + NADPH + H(+). It carries out the reaction 5,6-dihydrouridine(16) in tRNA + NAD(+) = uridine(16) in tRNA + NADH + H(+). The catalysed reaction is 5,6-dihydrouridine(17) in tRNA + NAD(+) = uridine(17) in tRNA + NADH + H(+). The enzyme catalyses 5,6-dihydrouridine(17) in tRNA + NADP(+) = uridine(17) in tRNA + NADPH + H(+). It catalyses the reaction a 5,6-dihydrouridine in mRNA + NAD(+) = a uridine in mRNA + NADH + H(+). It carries out the reaction a 5,6-dihydrouridine in mRNA + NADP(+) = a uridine in mRNA + NADPH + H(+). In terms of biological role, catalyzes the synthesis of dihydrouridine, a modified base found in the D-loop of most tRNAs. Also able to mediate dihydrouridylation of some mRNAs, thereby affecting their translation. In Schizosaccharomyces pombe (strain 972 / ATCC 24843) (Fission yeast), this protein is tRNA-dihydrouridine(16/17) synthase [NAD(P)(+)].